The chain runs to 244 residues: MKSLWLDIGNTRLKYWITENQQIIEHAAELHLQSPADLLLGLIQHFKHQGLHRIGISSVLDTENNQRIQQILKWLEIPVVFAKVHAEYAGLQCGYEVPSQLGIDRWLQVLAVAEEKENYCIIGCGTALTIDLTKGKQHLGGYILPNLYLQRDALIQNTKGIKIPDSAFDNLNPGNNTVDAVHHGILLGLISTIESIMQQSPKKLLLTGGDAPLFAKFLQKYQPTVETDLLLKGLQQYIAHYPKD.

An ATP-binding site is contributed by 7 to 14 (DIGNTRLK). Substrate contacts are provided by residues Tyr-95 and 102–105 (GIDR). Asp-104 (proton acceptor) is an active-site residue. Thr-126 is an ATP binding site. Thr-177 serves as a coordination point for substrate.

The protein belongs to the type III pantothenate kinase family. In terms of assembly, homodimer. NH4(+) serves as cofactor. Requires K(+) as cofactor.

It localises to the cytoplasm. The enzyme catalyses (R)-pantothenate + ATP = (R)-4'-phosphopantothenate + ADP + H(+). The protein operates within cofactor biosynthesis; coenzyme A biosynthesis; CoA from (R)-pantothenate: step 1/5. Catalyzes the phosphorylation of pantothenate (Pan), the first step in CoA biosynthesis. The sequence is that of Type III pantothenate kinase from Acinetobacter baumannii (strain AB307-0294).